A 297-amino-acid chain; its full sequence is ATP phosphoribosyltransferase (297 aa).

The protein belongs to the ATP phosphoribosyltransferase family.

It is found in the cytoplasm. The catalysed reaction is 1-(5-phospho-beta-D-ribosyl)-ATP + diphosphate = 5-phospho-alpha-D-ribose 1-diphosphate + ATP. It participates in amino-acid biosynthesis; L-histidine biosynthesis; L-histidine from 5-phospho-alpha-D-ribose 1-diphosphate: step 1/9. Functionally, catalyzes the condensation of ATP and 5-phosphoribose 1-diphosphate to form N'-(5'-phosphoribosyl)-ATP (PR-ATP). Has a crucial role in the pathway because the rate of histidine biosynthesis seems to be controlled primarily by regulation of the enzymatic activity. The polypeptide is ATP phosphoribosyltransferase (HIS1) (Eremothecium gossypii (strain ATCC 10895 / CBS 109.51 / FGSC 9923 / NRRL Y-1056) (Yeast)).